Consider the following 63-residue polypeptide: Conotoxin Cal12.5 (63 aa).

An N-terminal signal peptide occupies residues 1-21 (MKVTCVLVVLLLLLPYGDLLG).

This sequence belongs to the conotoxin O1 superfamily. Contains 4 disulfide bonds. As to expression, expressed by the venom duct.

Its subcellular location is the secreted. In terms of biological role, probable neurotoxin. The chain is Conotoxin Cal12.5 from Californiconus californicus (California cone).